A 201-amino-acid polypeptide reads, in one-letter code: Peptidyl-tRNA hydrolase (201 aa).

Tyr14 provides a ligand contact to tRNA. Catalysis depends on His19, which acts as the Proton acceptor. Residues Tyr64, Asn66, and Asn112 each coordinate tRNA.

This sequence belongs to the PTH family. Monomer.

It is found in the cytoplasm. It catalyses the reaction an N-acyl-L-alpha-aminoacyl-tRNA + H2O = an N-acyl-L-amino acid + a tRNA + H(+). In terms of biological role, hydrolyzes ribosome-free peptidyl-tRNAs (with 1 or more amino acids incorporated), which drop off the ribosome during protein synthesis, or as a result of ribosome stalling. Its function is as follows. Catalyzes the release of premature peptidyl moieties from peptidyl-tRNA molecules trapped in stalled 50S ribosomal subunits, and thus maintains levels of free tRNAs and 50S ribosomes. The chain is Peptidyl-tRNA hydrolase from Afipia carboxidovorans (strain ATCC 49405 / DSM 1227 / KCTC 32145 / OM5) (Oligotropha carboxidovorans).